A 660-amino-acid polypeptide reads, in one-letter code: Peroxisomal acyl-coenzyme A oxidase 1 (660 aa).

At Ser-26 the chain carries Phosphoserine. Lys-65 carries the post-translational modification N6-acetyllysine. 2 positions are modified to N6-succinyllysine: Lys-89 and Lys-90. FAD is bound by residues Thr-139 and Gly-178. Lys-216 is modified (N6-acetyllysine). Residue Lys-241 is modified to N6-succinyllysine. Residues Lys-255, Lys-267, and Lys-272 each carry the N6-acetyllysine modification. An N6-succinyllysine modification is found at Lys-349. Glu-421 (proton acceptor) is an active-site residue. N6-acetyllysine; alternate occurs at positions 437 and 446. An N6-succinyllysine; alternate mark is found at Lys-437 and Lys-446. N6-acetyllysine is present on Lys-500. Residue Lys-512 is modified to N6-acetyllysine; alternate. Lys-512 bears the N6-succinyllysine; alternate mark. N6-succinyllysine is present on Lys-542. Lys-637 is subject to N6-acetyllysine; alternate. Lys-637 bears the N6-succinyllysine; alternate mark. The residue at position 643 (Lys-643) is an N6-succinyllysine. Residue Ser-649 is modified to Phosphoserine. An N6-acetyllysine modification is found at Lys-651. Lys-654 carries the N6-succinyllysine modification. Residues 658 to 660 carry the Microbody targeting signal motif; that stretch reads SKL.

Belongs to the acyl-CoA oxidase family. In terms of assembly, homodimer. Interacts with LONP2. The cofactor is FAD.

The protein resides in the peroxisome. The enzyme catalyses a 2,3-saturated acyl-CoA + O2 = a (2E)-enoyl-CoA + H2O2. It carries out the reaction hexadecanoyl-CoA + O2 = (2E)-hexadecenoyl-CoA + H2O2. It catalyses the reaction dodecanoyl-CoA + O2 = (2E)-dodecenoyl-CoA + H2O2. The catalysed reaction is octanoyl-CoA + O2 = (2E)-octenoyl-CoA + H2O2. The enzyme catalyses decanoyl-CoA + O2 = (2E)-decenoyl-CoA + H2O2. It carries out the reaction tetradecanoyl-CoA + O2 = (2E)-tetradecenoyl-CoA + H2O2. It catalyses the reaction hexadecanedioyl-CoA + O2 = (2E)-hexadecenedioyl-CoA + H2O2. The catalysed reaction is tetracosanoyl-CoA + O2 = (2E)-tetracosenoyl-CoA + H2O2. The enzyme catalyses glutaryl-CoA + O2 = (2E)-glutaconyl-CoA + H2O2. It carries out the reaction hexanoyl-CoA + O2 = (2E)-hexenoyl-CoA + H2O2. It catalyses the reaction octadecanoyl-CoA + O2 = (2E)-octadecenoyl-CoA + H2O2. The catalysed reaction is (5Z,8Z,11Z,14Z,17Z)-eicosapentaenoyl-CoA + O2 = (2E,5Z,8Z,11Z,14Z,17Z)-icosahexaenoyl-CoA + H2O2. The enzyme catalyses (6Z,9Z,12Z,15Z,18Z,21Z)-tetracosahexaenoyl-CoA + O2 = (2E,6Z,9Z,12Z,15Z,18Z,21Z)-tetracosaheptaenoyl-CoA + H2O2. It functions in the pathway lipid metabolism; peroxisomal fatty acid beta-oxidation. In terms of biological role, involved in the initial and rate-limiting step of peroxisomal beta-oxidation of straight-chain saturated and unsaturated very-long-chain fatty acids. Catalyzes the desaturation of fatty acyl-CoAs such as palmitoyl-CoA (hexadecanoyl-CoA) to 2-trans-enoyl-CoAs ((2E)-enoyl-CoAs) such as (2E)-hexadecenoyl-CoA, and donates electrons directly to molecular oxygen (O(2)), thereby producing hydrogen peroxide (H(2)O(2)). This Bos taurus (Bovine) protein is Peroxisomal acyl-coenzyme A oxidase 1.